The chain runs to 272 residues: Glutamate racemase (272 aa).

Substrate is bound by residues aspartate 10–serine 11 and tyrosine 42–glycine 43. The Proton donor/acceptor role is filled by cysteine 74. A substrate-binding site is contributed by asparagine 75 to threonine 76. The active-site Proton donor/acceptor is cysteine 185. Position 186–187 (threonine 186–histidine 187) interacts with substrate.

The protein belongs to the aspartate/glutamate racemases family.

The catalysed reaction is L-glutamate = D-glutamate. It participates in cell wall biogenesis; peptidoglycan biosynthesis. Its function is as follows. Provides the (R)-glutamate required for cell wall biosynthesis. The chain is Glutamate racemase from Bacillus pumilus (strain SAFR-032).